A 207-amino-acid polypeptide reads, in one-letter code: MQNSDSGKKTFLIGITGMIGGGKSTATKILEEMGCFGINADRLAKRYTEPDSPILIELVELLGSEILDEQGKPDRKKISEIVFNNPKKLSRLNQLIHPLVRKDFQKILETTAKGKMVIWEVPLLFETDAYTLCDATVTVDSDPEESILRTISRDKVKKEDVLARIKNQLPLTEKLKRADYILRNRGNIDSLREECKSLYSTLLGKML.

In terms of domain architecture, DPCK spans 12-207; the sequence is LIGITGMIGG…LYSTLLGKML (196 aa). 20-25 contacts ATP; it reads GGGKST.

Belongs to the CoaE family.

The protein localises to the cytoplasm. It carries out the reaction 3'-dephospho-CoA + ATP = ADP + CoA + H(+). It functions in the pathway cofactor biosynthesis; coenzyme A biosynthesis; CoA from (R)-pantothenate: step 5/5. Its function is as follows. Catalyzes the phosphorylation of the 3'-hydroxyl group of dephosphocoenzyme A to form coenzyme A. The sequence is that of Dephospho-CoA kinase from Leptospira interrogans serogroup Icterohaemorrhagiae serovar copenhageni (strain Fiocruz L1-130).